Reading from the N-terminus, the 340-residue chain is Protein-arginine kinase (340 aa).

Residues Val-21–Ala-242 enclose the Phosphagen kinase C-terminal domain. Residues Ser-24–Arg-28, His-79, Arg-113, Arg-164–Met-168, and Arg-195–Glu-200 contribute to the ATP site.

This sequence belongs to the ATP:guanido phosphotransferase family.

It carries out the reaction L-arginyl-[protein] + ATP = N(omega)-phospho-L-arginyl-[protein] + ADP + H(+). Catalyzes the specific phosphorylation of arginine residues in proteins. The polypeptide is Protein-arginine kinase (Listeria innocua serovar 6a (strain ATCC BAA-680 / CLIP 11262)).